A 138-amino-acid polypeptide reads, in one-letter code: Large ribosomal subunit protein uL16 (138 aa).

Positions 1–18 (MALMPKRVKHRKSQRGRI) are enriched in basic residues. The segment at 1-21 (MALMPKRVKHRKSQRGRIKGN) is disordered.

It belongs to the universal ribosomal protein uL16 family. Part of the 50S ribosomal subunit.

In terms of biological role, binds 23S rRNA and is also seen to make contacts with the A and possibly P site tRNAs. The sequence is that of Large ribosomal subunit protein uL16 from Rhodopirellula baltica (strain DSM 10527 / NCIMB 13988 / SH1).